The sequence spans 550 residues: Acyl-CoA-dependent acyltransferase MAC2 (550 aa).

Belongs to the trichothecene O-acetyltransferase family.

It functions in the pathway secondary metabolite biosynthesis. In terms of biological role, acyl-CoA-dependent acyltransferase; part of the gene cluster that mediates the biosynthesis of mannosylerythritol lipids (MELs), surface-active substances that enhance the availability of water-insoluble substrates. Depending on the number of acetyl groups, mannosylerythritol lipids can be differentiated into MEL A (fully acetylated), MEL B and MEL C (monoacetylated at R-6 and R-4, respectively), and the fully deacetylated MEL D. The first step in the pathway is the generation of mannosylerythritol by the glycosyltransferase EMT1 which catalyzes the transfer of GDP-mannose to the C-4 atom of meso-erythritol. This reaction has to be stereospecific, since only mannosyl-D-erythritol is generated. The produced disaccharide is subsequently acylated with fatty acids of various lengths by the acyltransferases MAC1 and MAC2 at positions C-2 and C-3, repectively. The existence of MEL derivatives which carry an acetyl group at C-2 implies that at least MAC1 also accepts acetyl-CoA as a donor. The final step of MEL biosynthesis is the acetylation of the fully acylated mannosylerythritol lipids catalyzed by the acetyl-CoA-dependent acetyltransferase MAT1. MAT1 displays a relaxed regioselectivity and is able to transfer acetylgroups to both positions C-4 and C-6 of the mannosyl moiety. This is Acyl-CoA-dependent acyltransferase MAC2 from Pseudozyma antarctica (strain T-34) (Yeast).